The chain runs to 588 residues: Transport ATP-binding protein AarD (588 aa).

An ABC transmembrane type-1 domain is found at 24–316 (LRISMLLGVV…LGTYYHAKAQ (293 aa)). Transmembrane regions (helical) follow at residues 29–49 (LLGV…AVIL), 62–82 (LLTP…LTVI), 149–169 (IIPI…ALIL), 170–190 (FATA…AADA), 250–270 (SGVL…YFGF), and 276–296 (LNFG…ALIL). Residues 350–583 (IEANKLEIYS…EGPFARLLAH (234 aa)) enclose the ABC transporter domain. 383-390 (GQSGAGKS) is an ATP binding site.

This sequence belongs to the ABC transporter superfamily.

The protein resides in the cell inner membrane. Its function is as follows. Somehow involved in the cytochrome D branch of aerobic respiration. Seems to be a component of a transport system. This Providencia stuartii protein is Transport ATP-binding protein AarD (aarD).